The following is a 120-amino-acid chain: Late histone H2A.2.2 (120 aa).

Residues 1-18 are compositionally biased toward basic residues; that stretch reads MSGRGKGAKSKSKAKSRS. The interval 1-22 is disordered; that stretch reads MSGRGKGAKSKSKAKSRSSRAG. An N-acetylserine modification is found at serine 2. At serine 2 the chain carries Phosphoserine. Glutamine 104 carries the post-translational modification N5-methylglutamine. Residue lysine 119 forms a Glycyl lysine isopeptide (Lys-Gly) (interchain with G-Cter in ubiquitin) linkage.

This sequence belongs to the histone H2A family. The nucleosome is a histone octamer containing two molecules each of H2A, H2B, H3 and H4 assembled in one H3-H4 heterotetramer and two H2A-H2B heterodimers. The octamer wraps approximately 147 bp of DNA. In terms of processing, monoubiquitination of Lys-119 gives a specific tag for epigenetic transcriptional repression. Post-translationally, phosphorylation of Ser-2 directly represses transcription.

The protein localises to the nucleus. It localises to the chromosome. Its function is as follows. Core component of nucleosome. Nucleosomes wrap and compact DNA into chromatin, limiting DNA accessibility to the cellular machineries which require DNA as a template. Histones thereby play a central role in transcription regulation, DNA repair, DNA replication and chromosomal stability. DNA accessibility is regulated via a complex set of post-translational modifications of histones, also called histone code, and nucleosome remodeling. This is Late histone H2A.2.2 from Psammechinus miliaris (Green sea urchin).